The primary structure comprises 184 residues: Ribosome-recycling factor (184 aa).

Belongs to the RRF family.

The protein localises to the cytoplasm. Responsible for the release of ribosomes from messenger RNA at the termination of protein biosynthesis. May increase the efficiency of translation by recycling ribosomes from one round of translation to another. This chain is Ribosome-recycling factor, found in Natranaerobius thermophilus (strain ATCC BAA-1301 / DSM 18059 / JW/NM-WN-LF).